The chain runs to 699 residues: Tectonic-like complex member Mks1 (699 aa).

Disordered regions lie at residues 101-121 (RRSP…EGEI) and 373-396 (DGFS…IEED). Basic and acidic residues predominate over residues 108–119 (HEGEMEKDKNEG). In terms of domain architecture, C2 B9-type spans 434-560 (KRVSLLLELQ…RLQCIRPLGN (127 aa)). Residues 632-661 (LELGNDSSDDGDSNDDDVRSSSNPDTSRAT) are disordered.

In terms of assembly, probable component of the tectonic-like complex (also named MKS complex), composed of B9d1, B9d2, Cc2d2a, Mks1 and tctn. As to expression, expressed in chordotonal neurons in the antennae (at protein level). Expressed in spermatids (at protein level).

It localises to the cytoplasm. The protein localises to the cytoskeleton. It is found in the cilium basal body. Its subcellular location is the microtubule organizing center. The protein resides in the centrosome. It localises to the centriole. Its function is as follows. Probable component of the tectonic-like complex (also named MKS complex), a complex localized at the transition zone of primary cilia. Required for ciliary structure and function. This chain is Tectonic-like complex member Mks1, found in Drosophila melanogaster (Fruit fly).